The sequence spans 662 residues: Probable quinol oxidase subunit 1 (662 aa).

2 consecutive transmembrane segments (helical) span residues 14-34 (WMIT…IAVI) and 58-78 (IMYL…ALLI). His102 is a Fe(II)-heme a binding site. 8 helical membrane passes run 103–123 (GVIM…NIVV), 140–160 (VSFW…IIGG), 187–207 (IAIQ…FVTI), 228–248 (FITT…LALM), 273–293 (FFWV…FGIY), 311–331 (MVWA…HHFF), 336–356 (GALI…PTGV), and 376–396 (MLFS…GVML). Residues His279, Tyr283, His328, and His329 each contribute to the Cu cation site. The 1'-histidyl-3'-tyrosine (His-Tyr) cross-link spans 279-283 (HPEVY). His414 is a binding site for heme a3. The next 5 membrane-spanning stretches (helical) occupy residues 415 to 435 (FHYT…IFWY), 451 to 471 (CFWF…ILGL), 493 to 513 (ISTI…VSIV), 587 to 604 (PVGF…FFLI), and 608 to 627 (VIPA…YRSF). A Fe(II)-heme a-binding site is contributed by His416.

The protein belongs to the heme-copper respiratory oxidase family. Cu cation is required as a cofactor. Requires ferriheme a as cofactor. The cofactor is Heme A3..

It is found in the cell membrane. The catalysed reaction is 2 a quinol + O2 = 2 a quinone + 2 H2O. The protein operates within energy metabolism; oxidative phosphorylation. Its function is as follows. Catalyzes quinol oxidation with the concomitant reduction of oxygen to water. In Staphylococcus aureus (strain USA300), this protein is Probable quinol oxidase subunit 1 (qoxB).